Here is a 533-residue protein sequence, read N- to C-terminus: Peptidyl-prolyl cis-trans isomerase-like 2 (533 aa).

The 74-residue stretch at 38–111 folds into the U-box domain; that stretch reads KRLPFYCCSL…DEYFCPVTYK (74 aa). The PPIase cyclophilin-type domain occupies 284–438; sequence KKSYARIITN…REIKIKQIQM (155 aa). A coiled-coil region spans residues 443-519; sequence FEEYQRRLKN…SNEGEELQKK (77 aa). A compositionally biased stretch (basic and acidic residues) spans 454–477; that stretch reads LTHEANAERENEEMRKRREKEEKM. Residues 454–533 are disordered; the sequence is LTHEANAERE…KTTFGNFDNF (80 aa). Residues 523 to 533 are compositionally biased toward polar residues; sequence TKTTFGNFDNF.

This sequence belongs to the cyclophilin-type PPIase family. PPIL2 subfamily.

The protein localises to the nucleus. The enzyme catalyses [protein]-peptidylproline (omega=180) = [protein]-peptidylproline (omega=0). The catalysed reaction is S-ubiquitinyl-[E2 ubiquitin-conjugating enzyme]-L-cysteine + [acceptor protein]-L-lysine = [E2 ubiquitin-conjugating enzyme]-L-cysteine + N(6)-ubiquitinyl-[acceptor protein]-L-lysine.. It participates in protein modification; protein ubiquitination. In terms of biological role, may catalyze the cis-trans isomerization of proline imidic peptide bonds in oligopeptides thereby assisting the folding of proteins. May also function as a chaperone, playing a role in intracellular transport of proteins. May also have a protein ubiquitin ligase activity acting as an E3 ubiquitin protein ligase or as a ubiquitin-ubiquitin ligase promoting elongation of ubiquitin chains on proteins. This Rhizopus delemar (strain RA 99-880 / ATCC MYA-4621 / FGSC 9543 / NRRL 43880) (Mucormycosis agent) protein is Peptidyl-prolyl cis-trans isomerase-like 2 (cyp14).